The primary structure comprises 276 residues: Bis(5'-nucleosyl)-tetraphosphatase, symmetrical (276 aa).

Belongs to the Ap4A hydrolase family.

The catalysed reaction is P(1),P(4)-bis(5'-adenosyl) tetraphosphate + H2O = 2 ADP + 2 H(+). Its function is as follows. Hydrolyzes diadenosine 5',5'''-P1,P4-tetraphosphate to yield ADP. This is Bis(5'-nucleosyl)-tetraphosphatase, symmetrical from Tolumonas auensis (strain DSM 9187 / NBRC 110442 / TA 4).